A 186-amino-acid polypeptide reads, in one-letter code: MACGATLKRSMEFEALMSPQSPKRRRCAPLPGSPATPSPQRCGIRPEMQQGQQQPLPQLGGDRRLTPEQILQNIKQEYTRYQRRRQLEGAFNQSEAGVSNEVQASCSSLTAPSSPGSLVKKDQPTFSLRQVGILCERLLKDHEDKIREEYEQILNIKLAEQYESFVKFTHDQIMRRYGARPASYVS.

The segment at 1–64 (MACGATLKRS…PLPQLGGDRR (64 aa)) is disordered. A Nuclear localization signal motif is present at residues 22 to 27 (PKRRRC). Low complexity predominate over residues 49–60 (QQGQQQPLPQLG). The SYVS motif signature appears at 183–186 (SYVS).

This sequence belongs to the akirin family.

It localises to the nucleus. Molecular adapter that acts as a bridge between proteins, and which is involved skeletal muscle development. Functions as a signal transducer for MSTN during skeletal muscle regeneration and myogenesis. The protein is Akirin-1 of Xenopus tropicalis (Western clawed frog).